Reading from the N-terminus, the 277-residue chain is tRNA pseudouridine synthase A (277 aa).

Catalysis depends on Asp57, which acts as the Nucleophile. Tyr115 lines the substrate pocket.

It belongs to the tRNA pseudouridine synthase TruA family. Homodimer.

It carries out the reaction uridine(38/39/40) in tRNA = pseudouridine(38/39/40) in tRNA. Formation of pseudouridine at positions 38, 39 and 40 in the anticodon stem and loop of transfer RNAs. This Nitratidesulfovibrio vulgaris (strain DSM 19637 / Miyazaki F) (Desulfovibrio vulgaris) protein is tRNA pseudouridine synthase A.